The following is a 339-amino-acid chain: tRNA N6-adenosine threonylcarbamoyltransferase (339 aa).

2 residues coordinate Fe cation: His-111 and His-115. Substrate contacts are provided by residues 134–138 (LVSGG), Asp-167, Gly-180, and Asn-270. Asp-298 is a Fe cation binding site.

Belongs to the KAE1 / TsaD family. It depends on Fe(2+) as a cofactor.

The protein localises to the cytoplasm. The enzyme catalyses L-threonylcarbamoyladenylate + adenosine(37) in tRNA = N(6)-L-threonylcarbamoyladenosine(37) in tRNA + AMP + H(+). Functionally, required for the formation of a threonylcarbamoyl group on adenosine at position 37 (t(6)A37) in tRNAs that read codons beginning with adenine. Is involved in the transfer of the threonylcarbamoyl moiety of threonylcarbamoyl-AMP (TC-AMP) to the N6 group of A37, together with TsaE and TsaB. TsaD likely plays a direct catalytic role in this reaction. In Alkalilimnicola ehrlichii (strain ATCC BAA-1101 / DSM 17681 / MLHE-1), this protein is tRNA N6-adenosine threonylcarbamoyltransferase.